We begin with the raw amino-acid sequence, 147 residues long: Spermidine export protein MdtJ (147 aa).

The next 4 membrane-spanning stretches (helical) occupy residues 1-21 (MIYW…TLSM), 31-51 (TGHI…SLAV), 54-74 (VALG…ITIF), and 81-101 (ETLS…ILLV). Residues 105-117 (TRKPKQPNRHRGN) are compositionally biased toward basic residues. Residues 105–147 (TRKPKQPNRHRGNRPPSVQGLKTQTTGHHKGVAVESGEHHAAA) are disordered.

Belongs to the drug/metabolite transporter (DMT) superfamily. Small multidrug resistance (SMR) (TC 2.A.7.1) family. MdtJ subfamily. In terms of assembly, forms a complex with MdtI.

It is found in the cell inner membrane. Its function is as follows. Catalyzes the excretion of spermidine. The chain is Spermidine export protein MdtJ from Yersinia pseudotuberculosis serotype O:3 (strain YPIII).